A 314-amino-acid polypeptide reads, in one-letter code: WD repeat domain-containing protein 83 (314 aa).

7 WD repeats span residues 23–62, 65–104, 107–146, 151–188, 189–228, 231–272, and 275–313; these read CNQGAVRAVRFNVDGNYCMTCGSDKTLKLWNPHKGTLLKT, GHGYEVLDTAGSYDNSQMCSCSSDKTVILWDVAQGQVVRK, GHAGKVNCVQFNEEATVIMSGSIDSSIRCWDCRSRRPEAI, EAKDGISSIKISDHEILAGSVDGNLRRYDLRKGEMCAD, YLGSPITCVSFSQDSQCLLASSLDSTLRLLDKDTGELLGE, GHQN…LVLK, and VGKAAVQSLSFHPSECCLLTASEGGVQLWRGASYEEEGG.

Belongs to the WD repeat MORG1 family.

The protein resides in the cytoplasm. Its function is as follows. Molecular scaffold protein for various multimeric protein complexes. Acts as a module in the assembly of a multicomponent scaffold for the ERK pathway, linking ERK responses to specific agonists. Also involved in response to hypoxia by acting as a negative regulator of HIF1A/HIF-1-alpha. The sequence is that of WD repeat domain-containing protein 83 (wdr83) from Xenopus tropicalis (Western clawed frog).